Consider the following 310-residue polypeptide: Protein translocase subunit SecF (310 aa).

6 consecutive transmembrane segments (helical) span residues 20-42 (FKKV…IGIY), 140-160 (IEAG…YIWV), 164-184 (WYFG…ALGF), 194-214 (LSTI…SVVI), 246-266 (ILTV…GGEA), and 272-292 (VLVF…SAPI).

This sequence belongs to the SecD/SecF family. SecF subfamily. Forms a complex with SecD. Part of the essential Sec protein translocation apparatus which comprises SecA, SecYEG and auxiliary proteins SecDF-YajC and YidC.

It is found in the cell inner membrane. In terms of biological role, part of the Sec protein translocase complex. Interacts with the SecYEG preprotein conducting channel. SecDF uses the proton motive force (PMF) to complete protein translocation after the ATP-dependent function of SecA. The sequence is that of Protein translocase subunit SecF from Rickettsia canadensis (strain McKiel).